Here is a 168-residue protein sequence, read N- to C-terminus: MAFFRALCFVLLVGFAAACQPDCSWKCPPKCPPMWTFYNGNCYRYFGTGKTYDEAESHCQEFTEVGLGHLASIASAEENNLLLTMWKSVRTTTTGGLWIGLNDQAEEGNFIWTDGSAVTFTDWATTQPDNYQNEDCAHMRHELDGDDRWNDIACSRAFAYVCKMSTTN.

The signal sequence occupies residues 1-18 (MAFFRALCFVLLVGFAAA). One can recognise a C-type lectin domain in the interval 38 to 163 (YNGNCYRYFG…CSRAFAYVCK (126 aa)). 2 disulfides stabilise this stretch: cysteine 59–cysteine 162 and cysteine 136–cysteine 154.

Monomer, homodimer and homooligomer.

Its function is as follows. Alpha-N-acetylgalactosamine-specific lectin. The oligomeric form has Ca(2+)-dependent hemagglutination activity towards sheep erythrocytes. Its hemagglutination activity is inhibited by various monosaccharides, oligosaccharides and glycopeptides, including inhibition by GalNAc, blood group A trisaccharide, Tn antigen, mucin and asialomucin. This chain is Alpha-N-acetylgalactosamine-specific lectin, found in Patiria pectinifera (Starfish).